The chain runs to 96 residues: Protein Vpr (96 aa).

A homooligomerization region spans residues 1 to 42 (MEQAPEDQGPQREPYNEWTLELLEELKREAVRHFPRPWLHGL). Residues Ser79, Ser94, and Ser96 each carry the phosphoserine; by host modification.

This sequence belongs to the HIV-1 VPR protein family. In terms of assembly, homooligomer, may form homodimer. Interacts with p6-gag region of the Pr55 Gag precursor protein through a (Leu-X-X)4 motif near the C-terminus of the P6gag protein. Interacts with host UNG. May interact with host RAD23A/HHR23A. Interacts with host VPRBP/DCAF1, leading to hijack the CUL4A-RBX1-DDB1-DCAF1/VPRBP complex, mediating ubiquitination of host proteins such as TERT and ZGPAT and arrest of the cell cycle in G2 phase. In terms of processing, phosphorylated on several residues by host. These phosphorylations regulate VPR activity for the nuclear import of the HIV-1 pre-integration complex.

Its subcellular location is the virion. It is found in the host nucleus. The protein localises to the host extracellular space. During virus replication, may deplete host UNG protein, and incude G2-M cell cycle arrest. Acts by targeting specific host proteins for degradation by the 26S proteasome, through association with the cellular CUL4A-DDB1 E3 ligase complex by direct interaction with host VPRPB/DCAF-1. Cell cycle arrest reportedly occurs within hours of infection and is not blocked by antiviral agents, suggesting that it is initiated by the VPR carried into the virion. Additionally, VPR induces apoptosis in a cell cycle dependent manner suggesting that these two effects are mechanistically linked. Detected in the serum and cerebrospinal fluid of AIDS patient, VPR may also induce cell death to bystander cells. In terms of biological role, during virus entry, plays a role in the transport of the viral pre-integration (PIC) complex to the host nucleus. This function is crucial for viral infection of non-dividing macrophages. May act directly at the nuclear pore complex, by binding nucleoporins phenylalanine-glycine (FG)-repeat regions. The sequence is that of Protein Vpr from Human immunodeficiency virus type 1 group M subtype C (isolate 92BR025) (HIV-1).